A 611-amino-acid chain; its full sequence is Dihydroxy-acid dehydratase (611 aa).

Aspartate 81 contributes to the Mg(2+) binding site. Cysteine 122 provides a ligand contact to [2Fe-2S] cluster. Positions 123 and 124 each coordinate Mg(2+). An N6-carboxylysine modification is found at lysine 124. Position 195 (cysteine 195) interacts with [2Fe-2S] cluster. Residue glutamate 491 coordinates Mg(2+). Serine 517 (proton acceptor) is an active-site residue.

Belongs to the IlvD/Edd family. In terms of assembly, homodimer. [2Fe-2S] cluster is required as a cofactor. Mg(2+) serves as cofactor.

The enzyme catalyses (2R)-2,3-dihydroxy-3-methylbutanoate = 3-methyl-2-oxobutanoate + H2O. It carries out the reaction (2R,3R)-2,3-dihydroxy-3-methylpentanoate = (S)-3-methyl-2-oxopentanoate + H2O. Its pathway is amino-acid biosynthesis; L-isoleucine biosynthesis; L-isoleucine from 2-oxobutanoate: step 3/4. The protein operates within amino-acid biosynthesis; L-valine biosynthesis; L-valine from pyruvate: step 3/4. Its function is as follows. Functions in the biosynthesis of branched-chain amino acids. Catalyzes the dehydration of (2R,3R)-2,3-dihydroxy-3-methylpentanoate (2,3-dihydroxy-3-methylvalerate) into 2-oxo-3-methylpentanoate (2-oxo-3-methylvalerate) and of (2R)-2,3-dihydroxy-3-methylbutanoate (2,3-dihydroxyisovalerate) into 2-oxo-3-methylbutanoate (2-oxoisovalerate), the penultimate precursor to L-isoleucine and L-valine, respectively. The protein is Dihydroxy-acid dehydratase of Brucella anthropi (strain ATCC 49188 / DSM 6882 / CCUG 24695 / JCM 21032 / LMG 3331 / NBRC 15819 / NCTC 12168 / Alc 37) (Ochrobactrum anthropi).